Reading from the N-terminus, the 455-residue chain is Trigger factor (455 aa).

The PPIase FKBP-type domain maps to G169 to P262.

It belongs to the FKBP-type PPIase family. Tig subfamily.

Its subcellular location is the cytoplasm. The catalysed reaction is [protein]-peptidylproline (omega=180) = [protein]-peptidylproline (omega=0). Involved in protein export. Acts as a chaperone by maintaining the newly synthesized protein in an open conformation. Functions as a peptidyl-prolyl cis-trans isomerase. The polypeptide is Trigger factor (Rippkaea orientalis (strain PCC 8801 / RF-1) (Cyanothece sp. (strain PCC 8801))).